The sequence spans 131 residues: Phosphomevalonate dehydratase small subunit (131 aa).

The active-site Proton acceptor is Ser-62.

Belongs to the AcnX type II small subunit family. In terms of assembly, heterodimer composed of a large subunit (PMDh-L) and a small subunit (PMDh-S).

It catalyses the reaction (R)-5-phosphomevalonate = (2E)-3-methyl-5-phosphooxypent-2-enoate + H2O. It functions in the pathway isoprenoid biosynthesis; isopentenyl diphosphate biosynthesis via mevalonate pathway. Its function is as follows. Component of a hydro-lyase that catalyzes the dehydration of mevalonate 5-phosphate (MVA5P) to form trans-anhydromevalonate 5-phosphate (tAHMP). Involved in the archaeal mevalonate (MVA) pathway, which provides fundamental precursors for isoprenoid biosynthesis, such as isopentenyl diphosphate (IPP) and dimethylallyl diphosphate (DMAPP). This Methanothermobacter thermautotrophicus (strain ATCC 29096 / DSM 1053 / JCM 10044 / NBRC 100330 / Delta H) (Methanobacterium thermoautotrophicum) protein is Phosphomevalonate dehydratase small subunit.